Here is a 327-residue protein sequence, read N- to C-terminus: 2-methoxy-6-polyprenyl-1,4-benzoquinol methylase, mitochondrial (327 aa).

The N-terminal 49 residues, 1 to 49, are a transit peptide targeting the mitochondrion; it reads MAAPRSCALWSYCGRGWSWAMRGCQLLGLRSSWPGAPLSARLLPQEKRA. S-adenosyl-L-methionine contacts are provided by residues T117, D171, and 199–200; that span reads DA.

The protein belongs to the class I-like SAM-binding methyltransferase superfamily. MenG/UbiE family. Component of a multi-subunit COQ enzyme complex, composed of at least COQ3, COQ4, COQ5, COQ6, COQ7 and COQ9. Interacts with PYURF; the interaction is direct, stabilizes COQ5 protein and associates PYURF with COQ enzyme complex.

It is found in the mitochondrion inner membrane. It carries out the reaction 2-methoxy-6-(all-trans-decaprenyl)benzene-1,4-diol + S-adenosyl-L-methionine = 5-methoxy-2-methyl-3-(all-trans-decaprenyl)benzene-1,4-diol + S-adenosyl-L-homocysteine + H(+). It functions in the pathway cofactor biosynthesis; ubiquinone biosynthesis. Functionally, methyltransferase required for the conversion of 2-decaprenyl-6-methoxy-1,4-benzoquinol (DDMQH2) to 2-decaprenyl-3-methyl-6-methoxy-1,4-benzoquinol (DMQH2). This Pongo abelii (Sumatran orangutan) protein is 2-methoxy-6-polyprenyl-1,4-benzoquinol methylase, mitochondrial.